The primary structure comprises 326 residues: Phenylalanine--tRNA ligase alpha subunit (326 aa).

Glu251 lines the Mg(2+) pocket.

It belongs to the class-II aminoacyl-tRNA synthetase family. Phe-tRNA synthetase alpha subunit type 1 subfamily. Tetramer of two alpha and two beta subunits. The cofactor is Mg(2+).

It is found in the cytoplasm. The enzyme catalyses tRNA(Phe) + L-phenylalanine + ATP = L-phenylalanyl-tRNA(Phe) + AMP + diphosphate + H(+). The protein is Phenylalanine--tRNA ligase alpha subunit of Idiomarina loihiensis (strain ATCC BAA-735 / DSM 15497 / L2-TR).